The sequence spans 621 residues: Chaperone protein HscA homolog (621 aa).

Belongs to the heat shock protein 70 family.

In terms of biological role, chaperone involved in the maturation of iron-sulfur cluster-containing proteins. Has a low intrinsic ATPase activity which is markedly stimulated by HscB. In Cupriavidus pinatubonensis (strain JMP 134 / LMG 1197) (Cupriavidus necator (strain JMP 134)), this protein is Chaperone protein HscA homolog.